We begin with the raw amino-acid sequence, 190 residues long: Protein A52 (190 aa).

It belongs to the orthopoxvirus A52R protein family. In terms of assembly, interacts with host TRAF6 and IRAK2.

Functionally, bcl-2-like protein which targets host toll-like receptor signaling complexes to suppress innate immune response. Interacts with host TRAF6 to activate p38 and subsequently induce the expression of several cytokines such as IL-10. Also associates with host IRAK2 to inhibit NF-kappa-B signaling. This is Protein A52 from Homo sapiens (Human).